The following is a 99-amino-acid chain: Leydig cell tumor 10 kDa protein homolog (99 aa).

The tract at residues 1-36 (MAQGQRKFQAHKPAKSKTAAAASEKNRGPRKGGRVI) is disordered.

This sequence belongs to the UPF0390 family.

May have a potential role in hypercalcemia of malignancy. In Homo sapiens (Human), this protein is Leydig cell tumor 10 kDa protein homolog (C19orf53).